We begin with the raw amino-acid sequence, 334 residues long: Cobalt-precorrin-5B C(1)-methyltransferase (334 aa).

It belongs to the CbiD family.

The enzyme catalyses Co-precorrin-5B + S-adenosyl-L-methionine = Co-precorrin-6A + S-adenosyl-L-homocysteine. Its pathway is cofactor biosynthesis; adenosylcobalamin biosynthesis; cob(II)yrinate a,c-diamide from sirohydrochlorin (anaerobic route): step 6/10. In terms of biological role, catalyzes the methylation of C-1 in cobalt-precorrin-5B to form cobalt-precorrin-6A. The chain is Cobalt-precorrin-5B C(1)-methyltransferase from Methanoregula boonei (strain DSM 21154 / JCM 14090 / 6A8).